A 338-amino-acid chain; its full sequence is Anthranilate phosphoribosyltransferase (338 aa).

5-phospho-alpha-D-ribose 1-diphosphate-binding positions include G78, 81-82, S86, 88-91, 106-114, and S118; these read GD, NIST, and KHGNRSITS. G78 provides a ligand contact to anthranilate. S90 lines the Mg(2+) pocket. N109 contributes to the anthranilate binding site. Position 163 (R163) interacts with anthranilate. D222 and E223 together coordinate Mg(2+).

This sequence belongs to the anthranilate phosphoribosyltransferase family. Homodimer. Mg(2+) is required as a cofactor.

The enzyme catalyses N-(5-phospho-beta-D-ribosyl)anthranilate + diphosphate = 5-phospho-alpha-D-ribose 1-diphosphate + anthranilate. It participates in amino-acid biosynthesis; L-tryptophan biosynthesis; L-tryptophan from chorismate: step 2/5. In terms of biological role, catalyzes the transfer of the phosphoribosyl group of 5-phosphorylribose-1-pyrophosphate (PRPP) to anthranilate to yield N-(5'-phosphoribosyl)-anthranilate (PRA). The protein is Anthranilate phosphoribosyltransferase of Staphylococcus haemolyticus (strain JCSC1435).